The sequence spans 609 residues: Threonine--tRNA ligase (609 aa).

The editing domain stretch occupies residues 1 to 143 (MRVLYIHAER…SFKPEGAKVE (143 aa)). Catalytic regions lie at residues 195 to 491 (PRYL…PRLP) and 196 to 491 (RYLD…PRLP). Positions 288, 339, and 460 each coordinate Zn(2+).

Belongs to the class-II aminoacyl-tRNA synthetase family. As to quaternary structure, homodimer. Requires Zn(2+) as cofactor.

Its subcellular location is the cytoplasm. It catalyses the reaction tRNA(Thr) + L-threonine + ATP = L-threonyl-tRNA(Thr) + AMP + diphosphate + H(+). In terms of biological role, catalyzes the attachment of threonine to tRNA(Thr) in a two-step reaction: L-threonine is first activated by ATP to form Thr-AMP and then transferred to the acceptor end of tRNA(Thr). Also edits incorrectly charged L-seryl-tRNA(Thr). This is Threonine--tRNA ligase from Pyrobaculum islandicum (strain DSM 4184 / JCM 9189 / GEO3).